We begin with the raw amino-acid sequence, 90 residues long: MVCVPCILLPVLLALYIKFIQPIVFRFLPESWRTTFDALLYPTCPIQIPTASAEDATTVAAGKSVKVDGENVQKELDNYDNCTDSSKKNK.

The protein belongs to the UPF0729 family.

The sequence is that of UPF0729 protein Bm1_03610 from Brugia malayi (Filarial nematode worm).